The primary structure comprises 307 residues: Ornithine carbamoyltransferase (307 aa).

Residues 51–54, Gln-78, Arg-102, and 129–132 contribute to the carbamoyl phosphate site; these read STRT and HPVQ. Residues Asn-159, Asp-223, and 227-228 contribute to the L-ornithine site; that span reads SM. Carbamoyl phosphate-binding positions include 263-264 and Arg-291; that span reads CL.

It belongs to the aspartate/ornithine carbamoyltransferase superfamily. OTCase family.

The protein resides in the cytoplasm. It carries out the reaction carbamoyl phosphate + L-ornithine = L-citrulline + phosphate + H(+). Its pathway is amino-acid biosynthesis; L-arginine biosynthesis; L-arginine from L-ornithine and carbamoyl phosphate: step 1/3. Reversibly catalyzes the transfer of the carbamoyl group from carbamoyl phosphate (CP) to the N(epsilon) atom of ornithine (ORN) to produce L-citrulline. This chain is Ornithine carbamoyltransferase, found in Wolinella succinogenes (strain ATCC 29543 / DSM 1740 / CCUG 13145 / JCM 31913 / LMG 7466 / NCTC 11488 / FDC 602W) (Vibrio succinogenes).